Reading from the N-terminus, the 1035-residue chain is MSGSYPFIDIAALDSVREGFARGDAQLVLAHDLSTVLWVNGPGAKLFGYNRVEDLIEGQLDLPVATRRQIAAFSSENTSAPSAVAVRLGGGLRSELTHLHVSNIKLPDGVAALLVATQMPDNSAEAAISGLGDDSTHIALVDAVGKVVAASPRFALLDISASTLEDLIVEAGDATDRIVKRRIRTGSHSVPGAIARLTDTPALHLLCIVGDAPAQFQTAAEAVPLPDNAEAVLEEILPEQGDAPAQQAQKTHAEQPRPKTFAFDHDAPPARFIWKVGPDGTFSEISPDLAAVVGPNSADIVGRRFSDVANVFGFYTDGSIAALLLERDTWSGKRLLWPVEGTRLRVPVELAALPVYSRDREFLGFRGFGIVRPAEAEADPEEIGLALAGGIPQNRKPRKEPAETARMVGEDDVLALSEEVANDDQPAAVLPKPPLDITPTPGRRDSDKVISLLNSCAQEKVAADQAKFLKEKERATRPEGGLTKTERNAFREIAERLRKQGLANTRAESETPVSETSSIEPVEPTPPVKTRSEPIQPDETALLANLPVPVIIHSGDAIHYVNQALLDITGYESLDDIRSAGGVDVLFNSESDDGETRQSMVLRHADGSEEPVDAHLNAIAWRGGRALMLSLMPVTAADLPAPAELPAANDEEKQALEAHVEELKTILDTATDGVVLIDPEGRIRSMNHSASALFGYERDEAEGKFFSMLFAIESQRAAMDYLHGLSGNGVLSVLNDGREVIGREAKGGFIPLFMTIGKLPHTRGFCAVLRDITQWKRTEEELTNARKEAERASNQKTEFLARISHEIRTPLNAIIGFSELMADEKFGPIGNDRYRDYLRDINRSGNYVLALVNDLLDISKIEAGALDMQFEAVSLNDAIGEAIALMQPQANRERVIIRSSFQSNLPDIVADSRSIKQVALNLLSNAVRFTAPGGQVIVSTSYELNGDVVMRVRDTGIGMSKSEVEQALKPFRQINALEGRKAESAKDWRNEGTGLGLPLTKAMVEANRAQFAIDSNPGQGTVVEIVFPPTRVLAD.

Residues 1 to 613 form an important for polar localization region; it reads MSGSYPFIDI…HADGSEEPVD (613 aa). Positions 500-533 are disordered; that stretch reads QGLANTRAESETPVSETSSIEPVEPTPPVKTRSE. The segment at 614-1035 is interaction with DivK; that stretch reads AHLNAIAWRG…VFPPTRVLAD (422 aa). The PAS domain occupies 659–730; the sequence is HVEELKTILD…YLHGLSGNGV (72 aa). Positions 802–1031 constitute a Histidine kinase domain; that stretch reads RISHEIRTPL…VVEIVFPPTR (230 aa). The residue at position 805 (H805) is a Phosphohistidine; by autocatalysis.

In terms of assembly, interacts with DivK.

It localises to the cytoplasm. It catalyses the reaction ATP + protein L-histidine = ADP + protein N-phospho-L-histidine.. In terms of biological role, functions as a polar differentiation marker. Essential protein that, by localizing in the old pole of dividing cells, controls cell division and maturation, probably through control of DivK phosphorylation status and cellular distribution, which in turn regulates CtrA, a transcriptional regulator of the minB operon. The asymmetrical localization of this protein is probably required for cells to enter a new division cycle. The sequence is that of Cell-division control histidine kinase PdhS (pdhS) from Brucella canis (strain ATCC 23365 / NCTC 10854 / RM-666).